Reading from the N-terminus, the 369-residue chain is Flagellar P-ring protein (369 aa).

Positions 1-22 (MTKFKHLLALAALLLAAGAAQA) are cleaved as a signal peptide.

It belongs to the FlgI family. The basal body constitutes a major portion of the flagellar organelle and consists of four rings (L,P,S, and M) mounted on a central rod.

It localises to the periplasm. It is found in the bacterial flagellum basal body. Its function is as follows. Assembles around the rod to form the L-ring and probably protects the motor/basal body from shearing forces during rotation. The polypeptide is Flagellar P-ring protein (Pseudomonas aeruginosa (strain LESB58)).